The sequence spans 239 residues: Ribonuclease PH (239 aa).

Phosphate-binding positions include R87 and 125-127 (GTR).

The protein belongs to the RNase PH family. As to quaternary structure, homohexameric ring arranged as a trimer of dimers.

The catalysed reaction is tRNA(n+1) + phosphate = tRNA(n) + a ribonucleoside 5'-diphosphate. In terms of biological role, phosphorolytic 3'-5' exoribonuclease that plays an important role in tRNA 3'-end maturation. Removes nucleotide residues following the 3'-CCA terminus of tRNAs; can also add nucleotides to the ends of RNA molecules by using nucleoside diphosphates as substrates, but this may not be physiologically important. Probably plays a role in initiation of 16S rRNA degradation (leading to ribosome degradation) during starvation. This chain is Ribonuclease PH, found in Acaryochloris marina (strain MBIC 11017).